We begin with the raw amino-acid sequence, 682 residues long: MTTNDLFSIYAFSNMYDIFPRKYSQKELEEYHRKNPLFFSYTIFPVIKHRWSKAYICFQNNVYMLNIELDTSKPYDRVPIQHLIDIRPISTDIKKEIYKISDKTFITFECYSYLKCKGYNSIYDITLDDKRGLLSAGNILSIFSSNKQMPEKSSIGILKNPKPFTVIKFKSLSLITQLQIFELLRKRKQIVVTGSTGIGKTSQLPKVIMWYNYLFGGWDNLDRVRFDYISRPIVLSLPRVALVKSNGINFLQSLGFSDFEGSPVELRYGGKTEHTTRQHDGIVLSTNKLTSYSLSNYNIIIVDEIHEHDRIADIIISVLRKNIDTIHSLVLMSATLEDDRDRLQEFLPDVEFYHIEGPVLYSIKEIYVKNKYSYDSKAYTEEEKKNISTTLNWCRPRNGMCGILFLASVSQCISYKKYLEKSNSDMDFIIIHGKIPDITEVLNAVQRPGRERPCILVSTPYLESSITIRTATHVYDTGRVYVPKPFGGDQLFISKSMMTQRKGRVGRVSKGIYVYFYDMCLLKPIKSIDHEFLYEYIVYAKKFKLSLPNDLLVIPSDKDMLKKSEEYIKSFNISFDRLFEIYVNYFVNMVEYVKIYNKGGKKAENLDMFERNDILTGETLKDIKNLQLLVKINTTTRRKKMYCYKGEILFGPYMNTVIRLSSKQLYRNYVYMLTERSFTLYR.

One can recognise a Helicase ATP-binding domain in the interval 181–354 (FELLRKRKQI…EFLPDVEFYH (174 aa)). 194 to 201 (GSTGIGKT) provides a ligand contact to ATP. Residues 303–306 (DEIH) carry the DEXH box motif. A Helicase C-terminal domain is found at 386–551 (NISTTLNWCR…KFKLSLPNDL (166 aa)).

It belongs to the DEAD box helicase family. DEAH subfamily. As to quaternary structure, monomer.

It localises to the virion. It catalyses the reaction ATP + H2O = ADP + phosphate + H(+). In terms of biological role, NTP-dependent helicase that catalyzes unidirectional unwinding of 3'tailed duplex RNAs and plays an important role during transcription of early mRNAs, presumably by preventing R-loop formation behind the elongating RNA polymerase. Might also play a role in the export of newly synthesized mRNA chains out of the core into the cytoplasm. Required for replication and propagation of viral particles. This chain is RNA helicase NPH-II (NPH2), found in Vertebrata (FPV).